The chain runs to 542 residues: Chaperonin GroEL 3 (542 aa).

Residues 30-33, lysine 51, 87-91, glycine 415, and aspartate 494 each bind ATP; these read TLGP and DGTTT. Residues 523–542 are disordered; it reads KPKKKEPPMPAMPSDMGDYD.

Belongs to the chaperonin (HSP60) family. As to quaternary structure, forms a cylinder of 14 subunits composed of two heptameric rings stacked back-to-back. Interacts with the co-chaperonin GroES.

It is found in the cytoplasm. The catalysed reaction is ATP + H2O + a folded polypeptide = ADP + phosphate + an unfolded polypeptide.. In terms of biological role, together with its co-chaperonin GroES, plays an essential role in assisting protein folding. The GroEL-GroES system forms a nano-cage that allows encapsulation of the non-native substrate proteins and provides a physical environment optimized to promote and accelerate protein folding. In Syntrophus aciditrophicus (strain SB), this protein is Chaperonin GroEL 3.